Here is a 500-residue protein sequence, read N- to C-terminus: Phosphatidylserine decarboxylase proenzyme 1, mitochondrial (500 aa).

A mitochondrion; not cleaved when targeted to the endoplasmic reticulum-targeting transit peptide spans 1 to 48; it reads MSIMPVKNALAQGRTLLMGRMPAVKFSTRMQLRNRTAVLWNRKFSTRL. Residue asparagine 34 is glycosylated (N-linked (GlcNAc...) asparagine). The Mitochondrial matrix portion of the chain corresponds to 45–79; sequence STRLFVQQRRSSGEIVDRAKAAAANSGRKQVSMKW. Positions 57–101 are enables targeting to the endoplasmic reticulum in addition to mitochondria; sequence GEIVDRAKAAAANSGRKQVSMKWVVLTSFTIVLGTILLVSRNDST. A helical transmembrane segment spans residues 80-98; it reads VVLTSFTIVLGTILLVSRN. Topologically, residues 99 to 500 are mitochondrial intermembrane; sequence DSTEEDATEG…LGIIGKNDLK (402 aa). Catalysis depends on charge relay system; for autoendoproteolytic cleavage activity residues aspartate 210, histidine 348, and serine 463. The Schiff-base intermediate with substrate; via pyruvic acid; for decarboxylase activity role is filled by serine 463. Serine 463 is subject to Pyruvic acid (Ser); by autocatalysis. The required for processing and stability stretch occupies residues 475 to 492; sequence FKFDVRVGDKVKMGQKLG.

Belongs to the phosphatidylserine decarboxylase family. PSD-B subfamily. Eukaryotic type I sub-subfamily. As to quaternary structure, heterodimer of a large membrane-associated beta subunit and a small pyruvoyl-containing alpha subunit. Pyruvate is required as a cofactor. Post-translationally, glycosylated at Asn-34 in the endoplasmic reticulum. In terms of processing, the precursor is imported via the TOM complex into mitochondria, where the N-terminal presequence is cleaved by the matrix-located proteases MPP (MAS1-MAS2) and OCT1. Is synthesized initially as an inactive proenzyme. Formation of the active enzyme involves a self-maturation process in which the active site pyruvoyl group is generated from an internal serine residue via an autocatalytic post-translational modification. Two non-identical subunits are generated from the proenzyme in this reaction, and the pyruvate is formed at the N-terminus of the alpha chain, which is derived from the carboxyl end of the proenzyme. The autoendoproteolytic cleavage occurs by a canonical serine protease mechanism, in which the side chain hydroxyl group of the serine supplies its oxygen atom to form the C-terminus of the beta chain, while the remainder of the serine residue undergoes an oxidative deamination to produce ammonia and the pyruvoyl prosthetic group on the alpha chain. During this reaction, the Ser that is part of the protease active site of the proenzyme becomes the pyruvoyl prosthetic group, which constitutes an essential element of the active site of the mature decarboxylase.

It localises to the mitochondrion inner membrane. The protein localises to the lipid droplet. It is found in the endoplasmic reticulum membrane. The enzyme catalyses a 1,2-diacyl-sn-glycero-3-phospho-L-serine + H(+) = a 1,2-diacyl-sn-glycero-3-phosphoethanolamine + CO2. The protein operates within phospholipid metabolism; phosphatidylethanolamine biosynthesis; phosphatidylethanolamine from CDP-diacylglycerol: step 2/2. Its function is as follows. Catalyzes the formation of phosphatidylethanolamine (PtdEtn) from phosphatidylserine (PtdSer). Plays a central role in phospholipid metabolism and in the interorganelle trafficking of phosphatidylserine. Phosphatidylethanolamine formed in the mitochondria is exported to other membranes to fullfill their requirements for PtdEtn. Required for normal mitochondrial morphology and proper mitochondrial fusion during yeast mating. Involved in lipid droplet biogenesis at the endoplasmic reticulum membrane. Required for induction of mitophagy during nitrogen starvation. Appears to play a specific role in supporting respiratory complex III activity. The sequence is that of Phosphatidylserine decarboxylase proenzyme 1, mitochondrial from Saccharomyces cerevisiae (strain ATCC 204508 / S288c) (Baker's yeast).